The primary structure comprises 236 residues: 2,3,4,5-tetrahydropyridine-2,6-dicarboxylate N-acetyltransferase (236 aa).

This sequence belongs to the transferase hexapeptide repeat family. DapH subfamily.

The enzyme catalyses (S)-2,3,4,5-tetrahydrodipicolinate + acetyl-CoA + H2O = L-2-acetamido-6-oxoheptanedioate + CoA. It functions in the pathway amino-acid biosynthesis; L-lysine biosynthesis via DAP pathway; LL-2,6-diaminopimelate from (S)-tetrahydrodipicolinate (acetylase route): step 1/3. Catalyzes the transfer of an acetyl group from acetyl-CoA to tetrahydrodipicolinate. The sequence is that of 2,3,4,5-tetrahydropyridine-2,6-dicarboxylate N-acetyltransferase from Clostridium perfringens (strain SM101 / Type A).